Here is a 500-residue protein sequence, read N- to C-terminus: Catalase (500 aa).

Active-site residues include His59 and Asn131. Residue Tyr339 coordinates heme.

The protein belongs to the catalase family. Heme is required as a cofactor.

The enzyme catalyses 2 H2O2 = O2 + 2 H2O. In terms of biological role, decomposes hydrogen peroxide into water and oxygen; serves to protect cells from the toxic effects of hydrogen peroxide. This Neisseria gonorrhoeae protein is Catalase (katA).